The primary structure comprises 142 residues: uncharacterized protein (142 aa).

This is an uncharacterized protein from Invertebrate iridescent virus 3 (IIV-3).